The following is a 187-amino-acid chain: Cytokinin riboside 5'-monophosphate phosphoribohydrolase (187 aa).

Residues E80, 98 to 99 (RK), 115 to 121 (GVGTLDE), and T127 each bind substrate.

It belongs to the LOG family.

The catalysed reaction is N(6)-(dimethylallyl)adenosine 5'-phosphate + H2O = N(6)-dimethylallyladenine + D-ribose 5-phosphate. The enzyme catalyses 9-ribosyl-trans-zeatin 5'-phosphate + H2O = trans-zeatin + D-ribose 5-phosphate. Its function is as follows. Catalyzes the hydrolytic removal of ribose 5'-monophosphate from nitrogen N6-modified adenosines, the final step of bioactive cytokinin synthesis. This Mycobacterium marinum (strain ATCC BAA-535 / M) protein is Cytokinin riboside 5'-monophosphate phosphoribohydrolase.